The sequence spans 603 residues: Elongation factor 4 (603 aa).

The tr-type G domain maps to 2–184; sequence NHIRNFSIIA…AVVARMPPPR (183 aa). GTP contacts are provided by residues 14–19 and 131–134; these read DHGKST and NKMD.

This sequence belongs to the TRAFAC class translation factor GTPase superfamily. Classic translation factor GTPase family. LepA subfamily.

The protein localises to the cell inner membrane. The catalysed reaction is GTP + H2O = GDP + phosphate + H(+). Required for accurate and efficient protein synthesis under certain stress conditions. May act as a fidelity factor of the translation reaction, by catalyzing a one-codon backward translocation of tRNAs on improperly translocated ribosomes. Back-translocation proceeds from a post-translocation (POST) complex to a pre-translocation (PRE) complex, thus giving elongation factor G a second chance to translocate the tRNAs correctly. Binds to ribosomes in a GTP-dependent manner. This chain is Elongation factor 4, found in Albidiferax ferrireducens (strain ATCC BAA-621 / DSM 15236 / T118) (Rhodoferax ferrireducens).